The sequence spans 398 residues: Tryptophan synthase beta chain (398 aa).

Lys87 is modified (N6-(pyridoxal phosphate)lysine).

This sequence belongs to the TrpB family. As to quaternary structure, tetramer of two alpha and two beta chains. Pyridoxal 5'-phosphate serves as cofactor.

The catalysed reaction is (1S,2R)-1-C-(indol-3-yl)glycerol 3-phosphate + L-serine = D-glyceraldehyde 3-phosphate + L-tryptophan + H2O. Its pathway is amino-acid biosynthesis; L-tryptophan biosynthesis; L-tryptophan from chorismate: step 5/5. In terms of biological role, the beta subunit is responsible for the synthesis of L-tryptophan from indole and L-serine. The polypeptide is Tryptophan synthase beta chain (Blochmanniella floridana).